A 125-amino-acid polypeptide reads, in one-letter code: Holo-[acyl-carrier-protein] synthase (125 aa).

Mg(2+) is bound by residues Asp8 and Glu57.

It belongs to the P-Pant transferase superfamily. AcpS family. Mg(2+) is required as a cofactor.

It localises to the cytoplasm. The catalysed reaction is apo-[ACP] + CoA = holo-[ACP] + adenosine 3',5'-bisphosphate + H(+). Its function is as follows. Transfers the 4'-phosphopantetheine moiety from coenzyme A to a Ser of acyl-carrier-protein. This chain is Holo-[acyl-carrier-protein] synthase, found in Dechloromonas aromatica (strain RCB).